The following is a 382-amino-acid chain: Glutamine synthetase cytosolic isozyme (382 aa).

A GS beta-grasp domain is found at 36 to 118 (GKICAEYVWI…VMCDCYEPPK (83 aa)). The GS catalytic domain occupies 135 to 382 (TRFACAEVME…RLIVETTILL (248 aa)).

The protein belongs to the glutamine synthetase family. As to quaternary structure, homooctamer.

The protein localises to the cytoplasm. It catalyses the reaction L-glutamate + NH4(+) + ATP = L-glutamine + ADP + phosphate + H(+). The protein is Glutamine synthetase cytosolic isozyme (GLN1) of Chlamydomonas reinhardtii (Chlamydomonas smithii).